Here is a 205-residue protein sequence, read N- to C-terminus: Guanylate kinase (205 aa).

The region spanning 3–181 is the Guanylate kinase-like domain; that stretch reads GSLYIISAPS…ALSELHSIFL (179 aa). An ATP-binding site is contributed by 10 to 17; it reads APSGAGKT.

It belongs to the guanylate kinase family.

It localises to the cytoplasm. The enzyme catalyses GMP + ATP = GDP + ADP. Essential for recycling GMP and indirectly, cGMP. The polypeptide is Guanylate kinase (Hydrogenovibrio crunogenus (strain DSM 25203 / XCL-2) (Thiomicrospira crunogena)).